We begin with the raw amino-acid sequence, 669 residues long: MRIRHVVFCLLALVYGAETSDDDLDERTNIFIRDKLIPALKLAEVTKVNFTRLHLCHCSREVGCNARTTGWVPGIEFLNETDRSFYENTCYTDGSCYQSARPSPEISHFGCMDEKSVTDETEFHDTAAKVCTNNTKDPHATVWICCDKGNFCANETIIHLAPGPQQSSTWLILTILALLTFIVLLGIAIFLTRKSWEAKFDWYIRFKPKPGDPLRETENNVPMVTMGDGAGSSVPEVAPIEQQGSTMSTSAGNSFPPGIMPNNMKDMLDVLEETSGSGMGPTTLHKLTIGGQIRLTGRVGSGRFGNVSRGDYRGEAVAVKVFNALDEPAFHKETEIFETRMLRHPNVLRYIGSDRVDTGFVTELWLVTEYHPSGSLHDFLLENTVNIETYYNLMRSTASGLAFLHNQIGGSKESNKPAMAHRDIKSKNIMVKNDLTCAIGDLGLSLSKPEDAASDIIANENYKCGTVRYLAPEILNSTMQFTVFESYQCADVYSFSLVMWETLCRCEDGDVLPREAATVIPYIEWTDRDPQDAQMFDVVCTRRLRPTENPLWKDHPEMKHIMEIIKTCWNGNPSARFTSYICRKRMDERQQLLLDKKAKAVAQTAGVTVQDRKILGPQKPKDESPANGAPRIVQKEIDREDEQENWRETAKTPNGHISSNDDSSRPLLG.

An N-terminal signal peptide occupies residues 1-19 (MRIRHVVFCLLALVYGAET). The Extracellular portion of the chain corresponds to 20–170 (SDDDLDERTN…APGPQQSSTW (151 aa)). Residues N49, N79, N133, and N154 are each glycosylated (N-linked (GlcNAc...) asparagine). The helical transmembrane segment at 171-191 (LILTILALLTFIVLLGIAIFL) threads the bilayer. Residues 192 to 669 (TRKSWEAKFD…NDDSSRPLLG (478 aa)) lie on the Cytoplasmic side of the membrane. Residues 262 to 292 (NNMKDMLDVLEETSGSGMGPTTLHKLTIGGQ) enclose the GS domain. A Protein kinase domain is found at 293–593 (IRLTGRVGSG…KRMDERQQLL (301 aa)). ATP contacts are provided by residues 299-307 (VGSGRFGNV) and K320. Residue D423 is the Proton acceptor of the active site. Composition is skewed to basic and acidic residues over residues 611 to 624 (DRKILGPQKPKDES) and 633 to 650 (VQKEIDREDEQENWRETA). The interval 611 to 669 (DRKILGPQKPKDESPANGAPRIVQKEIDREDEQENWRETAKTPNGHISSNDDSSRPLLG) is disordered. The span at 651–661 (KTPNGHISSND) shows a compositional bias: polar residues.

The protein belongs to the protein kinase superfamily. TKL Ser/Thr protein kinase family. TGFB receptor subfamily. May interact with daf-4 to regulate dauer larva development. In terms of tissue distribution, head and ventral nerve cord from embryos to adults. Expressed in many sensory neurons. Subset of head neurons show coexpression with daf-4 when dauer/nondauer decision is made. Also expressed in non-neuronal cells: membraneous sheath surrounding the distal end of the intestine and in the distal tip cell of the gonad.

It is found in the membrane. It catalyses the reaction L-threonyl-[receptor-protein] + ATP = O-phospho-L-threonyl-[receptor-protein] + ADP + H(+). It carries out the reaction L-seryl-[receptor-protein] + ATP = O-phospho-L-seryl-[receptor-protein] + ADP + H(+). In terms of biological role, probably involved in a TGF-beta pathway. May be a receptor for TGF-beta-like ligand daf-7. Controls the decision of whether or not larvae enter a developmentally arrested state, known as dauer, in response to environmental conditions. Involved in regulating entry into quiescence triggered by satiety. Involved in sensitivity to CO2 levels. In AWC neurons, acts to promote expression of srsx-3, a member of the GPCR family. In Caenorhabditis elegans, this protein is Cell surface receptor daf-1 (daf-1).